The sequence spans 156 residues: Small ribosomal subunit protein uS7 (156 aa).

Belongs to the universal ribosomal protein uS7 family. As to quaternary structure, part of the 30S ribosomal subunit. Contacts proteins S9 and S11.

In terms of biological role, one of the primary rRNA binding proteins, it binds directly to 16S rRNA where it nucleates assembly of the head domain of the 30S subunit. Is located at the subunit interface close to the decoding center, probably blocks exit of the E-site tRNA. This is Small ribosomal subunit protein uS7 from Deinococcus radiodurans (strain ATCC 13939 / DSM 20539 / JCM 16871 / CCUG 27074 / LMG 4051 / NBRC 15346 / NCIMB 9279 / VKM B-1422 / R1).